The chain runs to 362 residues: 3-dehydroquinate synthase (362 aa).

Residues 71 to 76 (DGEQYK), 105 to 109 (GVVGD), 129 to 130 (TT), lysine 142, lysine 151, and 169 to 172 (CLKT) each bind NAD(+). Zn(2+) contacts are provided by glutamate 184, histidine 247, and histidine 264.

Belongs to the sugar phosphate cyclases superfamily. Dehydroquinate synthase family. Co(2+) is required as a cofactor. Zn(2+) serves as cofactor. It depends on NAD(+) as a cofactor.

The protein localises to the cytoplasm. It catalyses the reaction 7-phospho-2-dehydro-3-deoxy-D-arabino-heptonate = 3-dehydroquinate + phosphate. It functions in the pathway metabolic intermediate biosynthesis; chorismate biosynthesis; chorismate from D-erythrose 4-phosphate and phosphoenolpyruvate: step 2/7. Its function is as follows. Catalyzes the conversion of 3-deoxy-D-arabino-heptulosonate 7-phosphate (DAHP) to dehydroquinate (DHQ). The protein is 3-dehydroquinate synthase of Escherichia coli (strain K12 / MC4100 / BW2952).